Reading from the N-terminus, the 434-residue chain is Mitochondrial distribution and morphology protein 12 (434 aa).

The SMP-LTD domain occupies 1 to 434 (MSIDIDWERA…VYPSFWTFLV (434 aa)). The span at 70–83 (YEEDDNENFSESSE) shows a compositional bias: acidic residues. Disordered stretches follow at residues 70-141 (YEED…LRSP) and 181-275 (TPLG…DDLP). Positions 86–97 (SPTREPVDRYGS) are enriched in basic and acidic residues. Residues 215 to 237 (SAQSRPSTANTGNTLLSRGSMSS) show a composition bias toward polar residues.

This sequence belongs to the MDM12 family. As to quaternary structure, component of the ER-mitochondria encounter structure (ERMES) or MDM complex, composed of MMM1, MDM10, MDM12 and MDM34. An MMM1 homodimer associates with one molecule of MDM12 on each side in a pairwise head-to-tail manner, and the SMP-LTD domains of MMM1 and MDM12 generate a continuous hydrophobic tunnel for phospholipid trafficking.

It localises to the mitochondrion outer membrane. Its subcellular location is the endoplasmic reticulum membrane. Component of the ERMES/MDM complex, which serves as a molecular tether to connect the endoplasmic reticulum (ER) and mitochondria. Components of this complex are involved in the control of mitochondrial shape and protein biogenesis, and function in nonvesicular lipid trafficking between the ER and mitochondria. MDM12 is required for the interaction of the ER-resident membrane protein MMM1 and the outer mitochondrial membrane-resident beta-barrel protein MDM10. The MDM12-MMM1 subcomplex functions in the major beta-barrel assembly pathway that is responsible for biogenesis of all mitochondrial outer membrane beta-barrel proteins, and acts in a late step after the SAM complex. The MDM10-MDM12-MMM1 subcomplex further acts in the TOM40-specific pathway after the action of the MDM12-MMM1 complex. Essential for establishing and maintaining the structure of mitochondria and maintenance of mtDNA nucleoids. This chain is Mitochondrial distribution and morphology protein 12, found in Blastomyces gilchristii (strain SLH14081) (Blastomyces dermatitidis).